Consider the following 735-residue polypeptide: Translation initiation factor IF-2 (735 aa).

2 stretches are compositionally biased toward basic and acidic residues: residues 52–66 and 101–117; these read VNSE…EKPK and KGKE…EKKL. Residues 52–154 form a disordered region; it reads VNSEKKAEKK…PAKKEKELPK (103 aa). The segment covering 121–133 has biased composition (basic residues); the sequence is AKKKGKGPMKGKK. Residues 134 to 145 show a composition bias toward low complexity; the sequence is QAAPASKQAQQP. In terms of domain architecture, tr-type G spans 236–405; that stretch reads ERPPVVTIMG…LLVSEMEELK (170 aa). Residues 245–252 form a G1 region; the sequence is GHVDHGKT. 245 to 252 is a binding site for GTP; sequence GHVDHGKT. Positions 270 to 274 are G2; it reads GITQH. The interval 291-294 is G3; that stretch reads DTPG. GTP-binding positions include 291–295 and 345–348; these read DTPGH and NKMD. The tract at residues 345-348 is G4; the sequence is NKMD. The tract at residues 381-383 is G5; it reads SAK.

It belongs to the TRAFAC class translation factor GTPase superfamily. Classic translation factor GTPase family. IF-2 subfamily.

It is found in the cytoplasm. Its function is as follows. One of the essential components for the initiation of protein synthesis. Protects formylmethionyl-tRNA from spontaneous hydrolysis and promotes its binding to the 30S ribosomal subunits. Also involved in the hydrolysis of GTP during the formation of the 70S ribosomal complex. The chain is Translation initiation factor IF-2 from Geobacillus thermodenitrificans (strain NG80-2).